Consider the following 761-residue polypeptide: Mitochondrial inner membrane m-AAA protease component YTA10 (761 aa).

Residues 1 to 115 (MMMWQRYARG…SLSEYFRSKE (115 aa)) are Mitochondrial matrix-facing. Positions 67 to 101 (SWTRLNENRPNKEGEGKNNGNKDNNSNKEDGKDKR) are disordered. 2 stretches are compositionally biased toward basic and acidic residues: residues 72 to 82 (NENRPNKEGEG) and 91 to 101 (NSNKEDGKDKR). Residues 116–136 (FANTMFLTIGFTIIFTLLTPS) traverse the membrane as a helical segment. The Mitochondrial intermembrane portion of the chain corresponds to 137-223 (SNNSGDDSNR…IPIKYIERSS (87 aa)). Residues 224-244 (PFTFLFPFLPTIILLGGLYFI) form a helical membrane-spanning segment. Residues 245–761 (TRKINSSPPN…EPPEAPAATN (517 aa)) lie on the Mitochondrial matrix side of the membrane. The ATP site is built by Val290, Ala291, Thr332, Gly333, Lys334, Thr335, Leu336, and His472. His558 is a binding site for Zn(2+). Glu559 is a catalytic residue. Zn(2+) is bound by residues His562 and Asp634.

In the N-terminal section; belongs to the AAA ATPase family. The protein in the C-terminal section; belongs to the peptidase M41 family. In terms of assembly, component of the 850 kDa m-AAA protease complex, a heterohexamer composed of YTA12/RCA1 and YTA10/AFG3. Associates with the prohibitin complex, composed of PHB1 and PHB2, inhibiting the activity of the m-AAA protease complex. It depends on Zn(2+) as a cofactor.

It localises to the mitochondrion inner membrane. The catalysed reaction is ATP + H2O = ADP + phosphate + H(+). Its activity is regulated as follows. ATP hydrolysis is coordinated within m-AAA protease ring complexes: ATP-binding to YTA10/AFG3 inhibits ATP hydrolysis by the neighboring subunit YTA12/RCA1, leading to coordinated ATP hydrolysis within the AAA ATPase ring. Its function is as follows. Catalytic component of the m-AAA protease, a protease that plays a key role in proteostasis of inner mitochondrial membrane proteins. YTA10/AFG3 possesses both ATPase and protease activities: the ATPase activity is required to unfold substrates, threading them into the internal proteolytic cavity for hydrolysis into small peptide fragments. The complex is necessary for the assembly of mitochondrial respiratory chain and ATPase complexes. The m-AAA protease carries out protein quality control in the inner membrane of the mitochondria by mediating degradation of mistranslated or misfolded polypeptides. It also mediates protein maturation of the mitochondrial ribosomal subunit MRPL32/bL32m by catalyzing the cleavage of the presequence of MRPL32/bL32m prior to assembly into the mitochondrial ribosome. Promotes maturation of cytochrome c peroxidase (CCP1) by acting as a membrane protein dislocase via its ATPase activity: pulls the CCP1 transmembrane to the matrix prior to processing by the rhomboid protease PCP1. The membrane protein dislocase activity is also required to dislocate moderately hydrophobic transmembrane segments from the membrane. This Saccharomyces cerevisiae (strain ATCC 204508 / S288c) (Baker's yeast) protein is Mitochondrial inner membrane m-AAA protease component YTA10.